Reading from the N-terminus, the 244-residue chain is MRKYDPIIVALDFPEERKALEVAEKIIPYVKNFKVGLELFSVAGPHIVKALKEMGTNVFIDLKLFDIPNTVVRTLDRLLTLDPFMVTLHILGGEEMLRESVKLVSQYKESNKTEYPYLLGVTVLTSFNEETLRRSWGISRSLPEQVLFLAQLAQETGLDGVIASPWEIELLRNNLRRPMLIVTPGIRLTKDKTDDQQRIMTPREALERGSDYLVIGRPITQSSDPYEVIRNIRSQIEDIVESRL.

Substrate-binding positions include D12, K34, 61 to 70, T125, R187, Q196, G216, and R217; that span reads DLKLFDIPNT. Residue K63 is the Proton donor of the active site.

It belongs to the OMP decarboxylase family. Type 1 subfamily. Homodimer.

The catalysed reaction is orotidine 5'-phosphate + H(+) = UMP + CO2. The protein operates within pyrimidine metabolism; UMP biosynthesis via de novo pathway; UMP from orotate: step 2/2. Its function is as follows. Catalyzes the decarboxylation of orotidine 5'-monophosphate (OMP) to uridine 5'-monophosphate (UMP). This Dictyoglomus thermophilum (strain ATCC 35947 / DSM 3960 / H-6-12) protein is Orotidine 5'-phosphate decarboxylase.